Consider the following 482-residue polypeptide: MNAMTNKTLTTAAGAPVADNNNTMTAGPRGPALLQDVWFLEKLAHFDRERIPERVVHAKGSGAYGTFTVTHDISRYTRARIFAEVGKQTPLFLRFSTVAGERGAADAERDVRGFAIKFYTDEGNWDLVGNNTPVFFIRDPLKFPDFIHTQKRDPKTNLRNATAAWDFWSLNPESLHQVTILMSDRGLPQNYRQQHGFGSHTYSFVNDAGERFYVKFHFKSQQGIACYTDGEAAELVGRDRESAQRDLFQNIEQGQFPRWTLKVQVMPEAEAATYHINPFDLTKVWPHADYPLIEVGVLELNKNPENYFAEVEQAAFTPANVVPGIGFSPDKMLQGRLFSYGDTHRYRLGINHHQIPVNAPRCPFHSFHRDGMGRVDGNGGATLNYEPNSFGEWREAKHAAEPPLALDGQAADRWNHRVDEDYYSQPGALFRLMNDDQKQQLFGNIGRHMAGVPEEIQRRQLEHFRRADPAYAAGVAKALGLK.

A compositionally biased stretch (polar residues) spans 1 to 11 (MNAMTNKTLTT). Residues 1-21 (MNAMTNKTLTTAAGAPVADNN) are disordered. Active-site residues include His-57 and Asn-130. Tyr-340 contributes to the heme binding site.

This sequence belongs to the catalase family. As to quaternary structure, homodimer. The cofactor is heme.

It catalyses the reaction 2 H2O2 = O2 + 2 H2O. Its function is as follows. Decomposes hydrogen peroxide into water and oxygen; serves to protect cells from the toxic effects of hydrogen peroxide. This Bordetella bronchiseptica (strain ATCC BAA-588 / NCTC 13252 / RB50) (Alcaligenes bronchisepticus) protein is Catalase (katA).